Reading from the N-terminus, the 155-residue chain is Large ribosomal subunit protein uL30 (155 aa).

Belongs to the universal ribosomal protein uL30 family. In terms of assembly, part of the 50S ribosomal subunit.

The chain is Large ribosomal subunit protein uL30 from Pyrococcus abyssi (strain GE5 / Orsay).